Reading from the N-terminus, the 512-residue chain is ATP synthase subunit alpha (512 aa).

An ATP-binding site is contributed by 169–176 (GDRQTGKT).

This sequence belongs to the ATPase alpha/beta chains family. In terms of assembly, F-type ATPases have 2 components, CF(1) - the catalytic core - and CF(0) - the membrane proton channel. CF(1) has five subunits: alpha(3), beta(3), gamma(1), delta(1), epsilon(1). CF(0) has three main subunits: a(1), b(2) and c(9-12). The alpha and beta chains form an alternating ring which encloses part of the gamma chain. CF(1) is attached to CF(0) by a central stalk formed by the gamma and epsilon chains, while a peripheral stalk is formed by the delta and b chains.

The protein localises to the cell membrane. The catalysed reaction is ATP + H2O + 4 H(+)(in) = ADP + phosphate + 5 H(+)(out). In terms of biological role, produces ATP from ADP in the presence of a proton gradient across the membrane. The alpha chain is a regulatory subunit. The sequence is that of ATP synthase subunit alpha from Buchnera aphidicola subsp. Acyrthosiphon pisum (strain 5A).